The primary structure comprises 244 residues: Probable phosphatase NT01CX_1282 (244 aa).

Residues His8, His10, His16, His41, Glu74, His102, His132, Asp193, and His195 each coordinate Zn(2+).

Belongs to the PHP family. Zn(2+) is required as a cofactor.

This is Probable phosphatase NT01CX_1282 from Clostridium novyi (strain NT).